Here is a 138-residue protein sequence, read N- to C-terminus: Putative pre-16S rRNA nuclease (138 aa).

It belongs to the YqgF nuclease family.

Its subcellular location is the cytoplasm. In terms of biological role, could be a nuclease involved in processing of the 5'-end of pre-16S rRNA. This is Putative pre-16S rRNA nuclease from Polaromonas sp. (strain JS666 / ATCC BAA-500).